The sequence spans 222 residues: Eukaryotic translation initiation factor 4E-2 (222 aa).

Basic and acidic residues predominate over residues 1–20 (MVDEVEKPVSLEESKTNTRE). The tract at residues 1 to 35 (MVDEVEKPVSLEESKTNTREVEEEGEIVGESDDTM) is disordered. The segment covering 21 to 33 (VEEEGEIVGESDD) has biased composition (acidic residues). 2 EIF4G-binding regions span residues 47–50 (HALE) and 57–93 (FDNP…NNIH). MRNA-binding positions include 65–70 (KQAAWG), Lys97, and 115–116 (WE). A disulfide bond links Cys120 and Cys158. Residues 141–150 (YTLLAMIGEQ) are EIF4G-binding. MRNA contacts are provided by residues 165-170 (RVRQEK) and 210-214 (KKLDR).

The protein belongs to the eukaryotic initiation factor 4E family. As to quaternary structure, EIF4F is a multi-subunit complex, the composition of which varies with external and internal environmental conditions. It is composed of at least EIF4A, EIF4E and EIF4G. EIF4E is also known to interact with other partners. In higher plants two isoforms of EIF4F have been identified, named isoform EIF4F and isoform EIF(iso)4F. Isoform EIF4F has subunits p220 and p26, whereas isoform EIF(iso)4F has subunits p82 and p28. In terms of assembly, (Microbial infection) Interacts with potyvirus viral genome-linked protein (VPg); this interaction is possible in susceptible hosts but impaired in resistant plants. According to the redox status, the Cys-120-Cys-158 disulfide bridge may have a role in regulating protein function by affecting its ability to bind capped mRNA. Strongly expressed in susceptible plants but not in resistant ones.

It localises to the nucleus. The protein localises to the cytoplasm. Functionally, component of the protein complex eIF4F, which is involved in the recognition of the mRNA cap, ATP-dependent unwinding of 5'-terminal secondary structure and recruitment of mRNA to the ribosome. Recognizes and binds the 7-methylguanosine-containing mRNA cap during an early step in the initiation of protein synthesis and facilitates ribosome binding by inducing the unwinding of the mRNAs secondary structures. Key component of recessive resistance to potyviruses. (Microbial infection) Susceptibility host factor required for viral infection (e.g. potato virus Y (PVY) and pepper mottle virus (PepMoV)) by recruiting viral RNAs to the host ribosomal complex via an interaction with viral genome-linked protein (VPg). This Nicotiana tabacum (Common tobacco) protein is Eukaryotic translation initiation factor 4E-2.